Consider the following 157-residue polypeptide: 2-C-methyl-D-erythritol 2,4-cyclodiphosphate synthase (157 aa).

Aspartate 8 and histidine 10 together coordinate a divalent metal cation. Residues 8–10 (DVH) and 34–35 (HS) contribute to the 4-CDP-2-C-methyl-D-erythritol 2-phosphate site. Histidine 42 contacts a divalent metal cation. Residues 56 to 58 (DIG), 61 to 65 (FPDTD), 100 to 106 (AQAPKMA), 132 to 135 (TTTE), phenylalanine 139, and arginine 142 contribute to the 4-CDP-2-C-methyl-D-erythritol 2-phosphate site.

The protein belongs to the IspF family. As to quaternary structure, homotrimer. The cofactor is a divalent metal cation.

It catalyses the reaction 4-CDP-2-C-methyl-D-erythritol 2-phosphate = 2-C-methyl-D-erythritol 2,4-cyclic diphosphate + CMP. It participates in isoprenoid biosynthesis; isopentenyl diphosphate biosynthesis via DXP pathway; isopentenyl diphosphate from 1-deoxy-D-xylulose 5-phosphate: step 4/6. Involved in the biosynthesis of isopentenyl diphosphate (IPP) and dimethylallyl diphosphate (DMAPP), two major building blocks of isoprenoid compounds. Catalyzes the conversion of 4-diphosphocytidyl-2-C-methyl-D-erythritol 2-phosphate (CDP-ME2P) to 2-C-methyl-D-erythritol 2,4-cyclodiphosphate (ME-CPP) with a corresponding release of cytidine 5-monophosphate (CMP). The polypeptide is 2-C-methyl-D-erythritol 2,4-cyclodiphosphate synthase (Pseudomonas putida (strain ATCC 700007 / DSM 6899 / JCM 31910 / BCRC 17059 / LMG 24140 / F1)).